We begin with the raw amino-acid sequence, 159 residues long: Sulfur carrier protein DsrE2 (159 aa).

A run of 2 helical transmembrane segments spans residues 21-43 (PFIL…TFYG) and 72-91 (WFPV…TAMM).

Its subcellular location is the cell membrane. The protein operates within energy metabolism; sulfur metabolism. Functionally, sulfur carrier protein probably involved in sulfur trafficking for oxidative dissimilatory sulfur metabolism. May be a component of a cytoplasmic sulfur relay system delivering sulfur to DsrC. Binds sulfur in the presence of sulfide in vitro. This chain is Sulfur carrier protein DsrE2, found in Allochromatium vinosum (strain ATCC 17899 / DSM 180 / NBRC 103801 / NCIMB 10441 / D) (Chromatium vinosum).